A 277-amino-acid polypeptide reads, in one-letter code: Bifunctional protein FolD (277 aa).

Residues 164 to 166 (GRS), Ser189, and Thr230 contribute to the NADP(+) site.

It belongs to the tetrahydrofolate dehydrogenase/cyclohydrolase family. Homodimer.

The enzyme catalyses (6R)-5,10-methylene-5,6,7,8-tetrahydrofolate + NADP(+) = (6R)-5,10-methenyltetrahydrofolate + NADPH. It catalyses the reaction (6R)-5,10-methenyltetrahydrofolate + H2O = (6R)-10-formyltetrahydrofolate + H(+). Its pathway is one-carbon metabolism; tetrahydrofolate interconversion. In terms of biological role, catalyzes the oxidation of 5,10-methylenetetrahydrofolate to 5,10-methenyltetrahydrofolate and then the hydrolysis of 5,10-methenyltetrahydrofolate to 10-formyltetrahydrofolate. The polypeptide is Bifunctional protein FolD (Clostridium perfringens (strain SM101 / Type A)).